Reading from the N-terminus, the 256-residue chain is MPKVSVIMTSYNKSDYVAKSISSILSQTFSDFELFIMDDNSNEETLNVIRPFLNDNRVRFYQSDISGVKERTEKTRYAALINQAIEMAEGEYITYATDDNIYMPDRLLKMVRELDTHPEKAVIYSASKTYHLNENRDIVKETVRPAAQVTWNAPCAIDHCSVMHRYSVLEKVKEKFGSYWDESPAFYRIGDARFFWRVNHFYPFYPLDEELDLNYITDQSIHFQLFELEKNEFVRNLPPQRNCRELRESLKKLGMG.

C155 and C243 form a disulfide bridge. Residue D191 is part of the active site.

It belongs to the glycosyltransferase 2 family. In terms of assembly, monomer in solution.

Its pathway is spore coat biogenesis; spore coat polysaccharide biosynthesis. Glycosyltransferase implicated in the synthesis of the spore coat. The protein is Spore coat polysaccharide biosynthesis protein SpsA (spsA) of Bacillus subtilis (strain 168).